A 577-amino-acid chain; its full sequence is Optineurin (577 aa).

Disordered regions lie at residues 1–32 and 101–143; these read MSHQPLSCLTEKEDSPSESTGNGPPHLAHPNL and SHEN…KDQL. Residues 38–170 are a coiled coil; sequence EELLQQMKEL…VSELQLKLNS (133 aa). An interaction with Rab8 region spans residues 58-209; that stretch reads MKLNNQAMKG…GPTRTVSTGT (152 aa). An LIR motif is present at residues 176-181; sequence DSFVEI. Position 177 is a phosphoserine; by TBK1 (Ser177). Basic and acidic residues predominate over residues 186 to 197; the sequence is GEAEGSVKEIKH. 2 disordered regions span residues 186–209 and 261–297; these read GEAEGSVKEIKHSPGPTRTVSTGT and VSDFEKKTSNRSEIETQTEGSTEKENDEEKGPETVGS. Phosphoserine is present on Ser198. A coiled-coil region spans residues 239-508; sequence CLREGNQKVE…LLKENDAFED (270 aa). Basic and acidic residues-rich tracts occupy residues 261-274 and 281-292; these read VSDFEKKTSNRSEI and STEKENDEEKGP. A Phosphoserine modification is found at Ser342. Positions 411–577 are interaction with HD; the sequence is TRKESEKVDR…LQIHVMDCII (167 aa). The tract at residues 412 to 520 is interaction with MYO6; sequence RKESEKVDRA…RQSLMEMQSR (109 aa). The UBAN signature appears at 474-479; it reads DFHAER. Ser526 bears the Phosphoserine mark. A CCHC NOA-type zinc finger spans residues 547 to 577; the sequence is QRNIPIHSCPKCGEVLPDIDTLQIHVMDCII. Zn(2+) is bound by residues Cys555, Cys558, His571, and Cys575.

As to quaternary structure, self-associates. Interacts with HD. Interacts with GTF3A. Interacts with MYO6. Interacts (via UBAN) with ubiquitinated TFRC. Interacts with GTP-bound Rab8 (RAB8A and/or RAB8B). Interacts with TBC1D17. Interacts with TBK1. Interacts with TRAF3. Binds to linear ubiquitin chains. Interacts with LC3 family members MAP1LC3A, MAP1LC3B, GABARAP, GABARAPL1 and GABARAPL2; OPTN phosphorylation increases the association (at least with MAP1LC3B). Interacts with RAB12; the interaction may be indirect. Interacts with TBK1; this interaction leads to the Golgi localization of TBK1 and its subsequent activation. Interacts with palmitoyltransferase ZDHHC17/HIP14; the interaction does not lead to palmitoylation of OPTN. Interacts with CYLD. Interacts with TOM1; the interaction is indirect and is mediated by MYO6, which acts as a bridge between TOM1 and OPTN. Interacts with USP12; the interaction is independent of USP12 deubiquitinase activity and may be involved in regulation of autophagic flux. In terms of assembly, (Microbial infection) Interacts with E3 14.7 kDa protein of group C human adenovirus. Interacts with Bluetongue virus protein NS3. In terms of processing, phosphorylated by TBK1, leading to restrict bacterial proliferation in case of infection. Phosphorylation is induced by phorbol esters and decreases its half-time. In terms of tissue distribution, present in aqueous humor of the eye (at protein level). Expressed in the trabecular meshwork (at protein level). Expressed in nonpigmented ciliary epithelium (at protein level). Expressed at high levels in skeletal muscle, also detected in heart, brain, pancreas, kidney, placenta and liver. Expressed in dermal fibroblasts (at protein level).

The protein resides in the cytoplasm. It localises to the perinuclear region. It is found in the golgi apparatus. The protein localises to the trans-Golgi network. Its subcellular location is the cytoplasmic vesicle. The protein resides in the autophagosome. It localises to the recycling endosome. Its function is as follows. Plays an important role in the maintenance of the Golgi complex, in membrane trafficking, in exocytosis, through its interaction with myosin VI and Rab8. Links myosin VI to the Golgi complex and plays an important role in Golgi ribbon formation. Plays a role in the activation of innate immune response during viral infection. Mechanistically, recruits TBK1 at the Golgi apparatus, promoting its trans-phosphorylation after RLR or TLR3 stimulation. In turn, activated TBK1 phosphorylates its downstream partner IRF3 to produce IFN-beta/IFNB1. Plays a neuroprotective role in the eye and optic nerve. May act by regulating membrane trafficking and cellular morphogenesis via a complex that contains Rab8 and huntingtin (HD). Mediates the interaction of Rab8 with the probable GTPase-activating protein TBC1D17 during Rab8-mediated endocytic trafficking, such as that of transferrin receptor (TFRC/TfR); regulates Rab8 recruitment to tubules emanating from the endocytic recycling compartment. Autophagy receptor that interacts directly with both the cargo to become degraded and an autophagy modifier of the MAP1 LC3 family; targets ubiquitin-coated bacteria (xenophagy), such as cytoplasmic Salmonella enterica, and appears to function in the same pathway as SQSTM1 and CALCOCO2/NDP52. Functionally, (Microbial infection) May constitute a cellular target for various viruses, such as adenovirus E3 14.7 or Bluetongue virus, to inhibit innate immune response. During RNA virus infection, such as that of Sendai virus, negatively regulates the induction of IFNB1. In Homo sapiens (Human), this protein is Optineurin (OPTN).